The primary structure comprises 362 residues: Peptide chain release factor 1 (362 aa).

Gln-237 bears the N5-methylglutamine mark.

The protein belongs to the prokaryotic/mitochondrial release factor family. In terms of processing, methylated by PrmC. Methylation increases the termination efficiency of RF1.

The protein resides in the cytoplasm. Peptide chain release factor 1 directs the termination of translation in response to the peptide chain termination codons UAG and UAA. The chain is Peptide chain release factor 1 from Aliivibrio salmonicida (strain LFI1238) (Vibrio salmonicida (strain LFI1238)).